The sequence spans 725 residues: Catalase-peroxidase (725 aa).

The tryptophyl-tyrosyl-methioninium (Trp-Tyr) (with M-252) cross-link spans 98-226; sequence WHMAGSYRTS…LAAVQMGLIY (129 aa). His-99 serves as the catalytic Proton acceptor. Positions 226 to 252 form a cross-link, tryptophyl-tyrosyl-methioninium (Tyr-Met) (with W-98); sequence YVNPEGVNGKSDPQATAYQMRETFARM. His-267 is a heme b binding site.

It belongs to the peroxidase family. Peroxidase/catalase subfamily. As to quaternary structure, homodimer or homotetramer. It depends on heme b as a cofactor. In terms of processing, formation of the three residue Trp-Tyr-Met cross-link is important for the catalase, but not the peroxidase activity of the enzyme.

The catalysed reaction is H2O2 + AH2 = A + 2 H2O. The enzyme catalyses 2 H2O2 = O2 + 2 H2O. In terms of biological role, bifunctional enzyme with both catalase and broad-spectrum peroxidase activity. In Paracoccus denitrificans (strain Pd 1222), this protein is Catalase-peroxidase.